A 90-amino-acid chain; its full sequence is DNA-directed RNA polymerase subunit omega (90 aa).

Belongs to the RNA polymerase subunit omega family. As to quaternary structure, the RNAP catalytic core consists of 2 alpha, 1 beta, 1 beta' and 1 omega subunit. When a sigma factor is associated with the core the holoenzyme is formed, which can initiate transcription.

It catalyses the reaction RNA(n) + a ribonucleoside 5'-triphosphate = RNA(n+1) + diphosphate. Its function is as follows. Promotes RNA polymerase assembly. Latches the N- and C-terminal regions of the beta' subunit thereby facilitating its interaction with the beta and alpha subunits. In Streptomyces coelicolor (strain ATCC BAA-471 / A3(2) / M145), this protein is DNA-directed RNA polymerase subunit omega (rpoZ).